Consider the following 110-residue polypeptide: Cytochrome subunit of sulfide dehydrogenase (110 aa).

Residues 1-16 (MLAAAPLLLASGNGFA) form the signal peptide. The heme c site is built by cysteine 41, cysteine 44, histidine 45, and methionine 83.

As to quaternary structure, dimer of one cytochrome and one flavoprotein. Post-translationally, binds 1 heme c group covalently per subunit.

The protein resides in the periplasm. Functionally, monoheme cytochrome that function as the electron transport subunit of sulfide dehydrogenase. The sequence is that of Cytochrome subunit of sulfide dehydrogenase (fccA) from Chlorobaculum tepidum (strain ATCC 49652 / DSM 12025 / NBRC 103806 / TLS) (Chlorobium tepidum).